Here is a 323-residue protein sequence, read N- to C-terminus: o-succinylbenzoate synthase (323 aa).

Catalysis depends on K134, which acts as the Proton donor. 3 residues coordinate Mg(2+): D162, E191, and D214. Residue K236 is the Proton acceptor of the active site.

It belongs to the mandelate racemase/muconate lactonizing enzyme family. MenC type 1 subfamily. It depends on a divalent metal cation as a cofactor.

It catalyses the reaction (1R,6R)-6-hydroxy-2-succinyl-cyclohexa-2,4-diene-1-carboxylate = 2-succinylbenzoate + H2O. Its pathway is quinol/quinone metabolism; 1,4-dihydroxy-2-naphthoate biosynthesis; 1,4-dihydroxy-2-naphthoate from chorismate: step 4/7. It functions in the pathway quinol/quinone metabolism; menaquinone biosynthesis. Its function is as follows. Converts 2-succinyl-6-hydroxy-2,4-cyclohexadiene-1-carboxylate (SHCHC) to 2-succinylbenzoate (OSB). This is o-succinylbenzoate synthase from Yersinia pseudotuberculosis serotype O:3 (strain YPIII).